A 107-amino-acid chain; its full sequence is Phosphoribosyl-ATP pyrophosphatase (107 aa).

This sequence belongs to the PRA-PH family.

It is found in the cytoplasm. It catalyses the reaction 1-(5-phospho-beta-D-ribosyl)-ATP + H2O = 1-(5-phospho-beta-D-ribosyl)-5'-AMP + diphosphate + H(+). It participates in amino-acid biosynthesis; L-histidine biosynthesis; L-histidine from 5-phospho-alpha-D-ribose 1-diphosphate: step 2/9. The chain is Phosphoribosyl-ATP pyrophosphatase from Rhizobium etli (strain CIAT 652).